Consider the following 122-residue polypeptide: Serum amyloid A-3 protein (122 aa).

The signal sequence occupies residues 1 to 18 (MKPSIAIILCILILGVDS). Residues 87–122 (TGHGAEDSRADQFANEWGRSGKDPNHFRPAGLPKRY) form a disordered region.

This sequence belongs to the SAA family. As to expression, found in various tissues.

The protein localises to the secreted. Major acute phase reactant. Apolipoprotein of the HDL complex. In vitro exhibits antimicrobial activity against Escherichia coli, Streptococcus uberis and Pseudomonas aeruginosa. The sequence is that of Serum amyloid A-3 protein (Saa3) from Mus musculus (Mouse).